A 255-amino-acid polypeptide reads, in one-letter code: Octanoyltransferase (255 aa).

A BPL/LPL catalytic domain is found at 54 to 238 (GDANELVWLL…SFTTIFGATV (185 aa)). Residues 92 to 99 (RGGQLTYH), 167 to 169 (AIG), and 180 to 182 (GIA) contribute to the substrate site. Cysteine 198 functions as the Acyl-thioester intermediate in the catalytic mechanism.

This sequence belongs to the LipB family.

It is found in the cytoplasm. The catalysed reaction is octanoyl-[ACP] + L-lysyl-[protein] = N(6)-octanoyl-L-lysyl-[protein] + holo-[ACP] + H(+). Its pathway is protein modification; protein lipoylation via endogenous pathway; protein N(6)-(lipoyl)lysine from octanoyl-[acyl-carrier-protein]: step 1/2. Functionally, catalyzes the transfer of endogenously produced octanoic acid from octanoyl-acyl-carrier-protein onto the lipoyl domains of lipoate-dependent enzymes. Lipoyl-ACP can also act as a substrate although octanoyl-ACP is likely to be the physiological substrate. The sequence is that of Octanoyltransferase from Rhodopseudomonas palustris (strain BisB5).